Consider the following 232-residue polypeptide: Small ribosomal subunit protein uS3 (232 aa).

Residues 39 to 107 form the KH type-2 domain; it reads VRQYLTKELK…PAQINIAEVR (69 aa).

It belongs to the universal ribosomal protein uS3 family. Part of the 30S ribosomal subunit. Forms a tight complex with proteins S10 and S14.

Binds the lower part of the 30S subunit head. Binds mRNA in the 70S ribosome, positioning it for translation. In Aliivibrio fischeri (strain MJ11) (Vibrio fischeri), this protein is Small ribosomal subunit protein uS3.